Consider the following 252-residue polypeptide: 2-succinyl-6-hydroxy-2,4-cyclohexadiene-1-carboxylate synthase (252 aa).

This sequence belongs to the AB hydrolase superfamily. MenH family. In terms of assembly, monomer.

The enzyme catalyses 5-enolpyruvoyl-6-hydroxy-2-succinyl-cyclohex-3-ene-1-carboxylate = (1R,6R)-6-hydroxy-2-succinyl-cyclohexa-2,4-diene-1-carboxylate + pyruvate. It functions in the pathway quinol/quinone metabolism; 1,4-dihydroxy-2-naphthoate biosynthesis; 1,4-dihydroxy-2-naphthoate from chorismate: step 3/7. The protein operates within quinol/quinone metabolism; menaquinone biosynthesis. Its function is as follows. Catalyzes a proton abstraction reaction that results in 2,5-elimination of pyruvate from 2-succinyl-5-enolpyruvyl-6-hydroxy-3-cyclohexene-1-carboxylate (SEPHCHC) and the formation of 2-succinyl-6-hydroxy-2,4-cyclohexadiene-1-carboxylate (SHCHC). This chain is 2-succinyl-6-hydroxy-2,4-cyclohexadiene-1-carboxylate synthase, found in Escherichia coli O9:H4 (strain HS).